The chain runs to 188 residues: Elongation factor P (188 aa).

N6-(3,6-diaminohexanoyl)-5-hydroxylysine is present on Lys34.

It belongs to the elongation factor P family. May be beta-lysylated on the epsilon-amino group of Lys-34 by the combined action of EpmA and EpmB, and then hydroxylated on the C5 position of the same residue by EpmC (if this protein is present). Lysylation is critical for the stimulatory effect of EF-P on peptide-bond formation. The lysylation moiety may extend toward the peptidyltransferase center and stabilize the terminal 3-CCA end of the tRNA. Hydroxylation of the C5 position on Lys-34 may allow additional potential stabilizing hydrogen-bond interactions with the P-tRNA.

The protein localises to the cytoplasm. It participates in protein biosynthesis; polypeptide chain elongation. In terms of biological role, involved in peptide bond synthesis. Alleviates ribosome stalling that occurs when 3 or more consecutive Pro residues or the sequence PPG is present in a protein, possibly by augmenting the peptidyl transferase activity of the ribosome. Modification of Lys-34 is required for alleviation. This Glaesserella parasuis serovar 5 (strain SH0165) (Haemophilus parasuis) protein is Elongation factor P.